Here is a 309-residue protein sequence, read N- to C-terminus: Small ribosomal subunit biogenesis GTPase RsgA (309 aa).

In terms of domain architecture, CP-type G spans 64–225; the sequence is ENELVRPPLA…VADTPGFSTY (162 aa). GTP is bound by residues 113 to 116 and 168 to 176; these read SKTD and GQTGAGKST. Zn(2+) contacts are provided by Cys249, Cys254, His256, and Cys262.

It belongs to the TRAFAC class YlqF/YawG GTPase family. RsgA subfamily. Monomer. Associates with 30S ribosomal subunit, binds 16S rRNA. It depends on Zn(2+) as a cofactor.

The protein resides in the cytoplasm. Functionally, one of several proteins that assist in the late maturation steps of the functional core of the 30S ribosomal subunit. Helps release RbfA from mature subunits. May play a role in the assembly of ribosomal proteins into the subunit. Circularly permuted GTPase that catalyzes slow GTP hydrolysis, GTPase activity is stimulated by the 30S ribosomal subunit. This is Small ribosomal subunit biogenesis GTPase RsgA from Pediococcus pentosaceus (strain ATCC 25745 / CCUG 21536 / LMG 10740 / 183-1w).